The primary structure comprises 300 residues: Putative hydrolase ML2424 (300 aa).

Residue Asp-56 is the Nucleophile of the active site. The Mg(2+) site is built by Asp-56, Asp-58, and Asp-231. Catalysis depends on Asp-58, which acts as the Proton donor.

The protein belongs to the HAD-like hydrolase superfamily. SerB family. Requires Mg(2+) as cofactor.

This chain is Putative hydrolase ML2424, found in Mycobacterium leprae (strain TN).